Here is a 407-residue protein sequence, read N- to C-terminus: Peptidase T (407 aa).

His81 is a binding site for Zn(2+). Asp83 is an active-site residue. Asp142 is a Zn(2+) binding site. The Proton acceptor role is filled by Glu176. Glu177, Asp199, and His381 together coordinate Zn(2+).

It belongs to the peptidase M20B family. Zn(2+) serves as cofactor.

It localises to the cytoplasm. It carries out the reaction Release of the N-terminal residue from a tripeptide.. In terms of biological role, cleaves the N-terminal amino acid of tripeptides. The sequence is that of Peptidase T from Streptococcus sanguinis (strain SK36).